A 199-amino-acid chain; its full sequence is UPF0301 protein Rfer_1377 (199 aa).

This sequence belongs to the UPF0301 (AlgH) family.

This Albidiferax ferrireducens (strain ATCC BAA-621 / DSM 15236 / T118) (Rhodoferax ferrireducens) protein is UPF0301 protein Rfer_1377.